A 416-amino-acid chain; its full sequence is UDP-N-acetylglucosamine 1-carboxyvinyltransferase (416 aa).

22–23 (KN) is a phosphoenolpyruvate binding site. Arginine 92 serves as a coordination point for UDP-N-acetyl-alpha-D-glucosamine. The Proton donor role is filled by cysteine 116. Cysteine 116 carries the 2-(S-cysteinyl)pyruvic acid O-phosphothioketal modification. Aspartate 306 and isoleucine 328 together coordinate UDP-N-acetyl-alpha-D-glucosamine.

It belongs to the EPSP synthase family. MurA subfamily.

It is found in the cytoplasm. The enzyme catalyses phosphoenolpyruvate + UDP-N-acetyl-alpha-D-glucosamine = UDP-N-acetyl-3-O-(1-carboxyvinyl)-alpha-D-glucosamine + phosphate. It functions in the pathway cell wall biogenesis; peptidoglycan biosynthesis. Cell wall formation. Adds enolpyruvyl to UDP-N-acetylglucosamine. The protein is UDP-N-acetylglucosamine 1-carboxyvinyltransferase of Buchnera aphidicola subsp. Baizongia pistaciae (strain Bp).